The chain runs to 176 residues: MPLNLEDKKAIVSEVAAVAASAHSAVAAEYRGLTVTEMTELRAKARQSNVYLRVVKNSLARRAVEGTDFACMQEGLVGPLVLAFSQDDPGAAARLVKDFAKEHKKLEVKLVSVGGQLLGPGELERLASMPTRDQAISLLMAVMKAPLDKFARTLNEVPGKLVRTVAAIRDQKQASA.

Belongs to the universal ribosomal protein uL10 family. In terms of assembly, part of the ribosomal stalk of the 50S ribosomal subunit. The N-terminus interacts with L11 and the large rRNA to form the base of the stalk. The C-terminus forms an elongated spine to which L12 dimers bind in a sequential fashion forming a multimeric L10(L12)X complex.

Forms part of the ribosomal stalk, playing a central role in the interaction of the ribosome with GTP-bound translation factors. This is Large ribosomal subunit protein uL10 from Thioalkalivibrio sulfidiphilus (strain HL-EbGR7).